A 226-amino-acid polypeptide reads, in one-letter code: ATP synthase F(0) complex subunit a (226 aa).

5 consecutive transmembrane segments (helical) span residues 9-29 (FITP…FPSL), 68-88 (WTLM…LGLL), 97-117 (QLSM…ITGF), 138-158 (IPML…ALAV), and 184-204 (ISPT…ILEF).

This sequence belongs to the ATPase A chain family. Component of the ATP synthase complex composed at least of ATP5F1A/subunit alpha, ATP5F1B/subunit beta, ATP5MC1/subunit c (homooctomer), MT-ATP6/subunit a, MT-ATP8/subunit 8, ATP5ME/subunit e, ATP5MF/subunit f, ATP5MG/subunit g, ATP5MK/subunit k, ATP5MJ/subunit j, ATP5F1C/subunit gamma, ATP5F1D/subunit delta, ATP5F1E/subunit epsilon, ATP5PF/subunit F6, ATP5PB/subunit b, ATP5PD/subunit d, ATP5PO/subunit OSCP. ATP synthase complex consists of a soluble F(1) head domain (subunits alpha(3) and beta(3)) - the catalytic core - and a membrane F(0) domain - the membrane proton channel (subunits c, a, 8, e, f, g, k and j). These two domains are linked by a central stalk (subunits gamma, delta, and epsilon) rotating inside the F1 region and a stationary peripheral stalk (subunits F6, b, d, and OSCP). Interacts with DNAJC30; interaction is direct.

It is found in the mitochondrion inner membrane. It carries out the reaction H(+)(in) = H(+)(out). Functionally, subunit a, of the mitochondrial membrane ATP synthase complex (F(1)F(0) ATP synthase or Complex V) that produces ATP from ADP in the presence of a proton gradient across the membrane which is generated by electron transport complexes of the respiratory chain. ATP synthase complex consist of a soluble F(1) head domain - the catalytic core - and a membrane F(1) domain - the membrane proton channel. These two domains are linked by a central stalk rotating inside the F(1) region and a stationary peripheral stalk. During catalysis, ATP synthesis in the catalytic domain of F(1) is coupled via a rotary mechanism of the central stalk subunits to proton translocation. With the subunit c (ATP5MC1), forms the proton-conducting channel in the F(0) domain, that contains two crucial half-channels (inlet and outlet) that facilitate proton movement from the mitochondrial intermembrane space (IMS) into the matrix. Protons are taken up via the inlet half-channel and released through the outlet half-channel, following a Grotthuss mechanism. This Capra hircus (Goat) protein is ATP synthase F(0) complex subunit a.